The primary structure comprises 208 residues: MKIVEVKHPLVKHKLGLMRENDISTKRFRELASEVGSLLTYVATADLETEKVTIEGWNGPVEIEQIKGKKITVVPILRAGLGMMEGVLENVPSARISVVGVYRDEETLKPVPYFQKLVSNIDERMALVVDPMLATGGSMIATIDLLKKAGCKSIKVLVLVAAPEGIKALEAAHPDVELYTASIDQGLNEHGYIIPGLGDAGDKIFGTK.

5-phospho-alpha-D-ribose 1-diphosphate contacts are provided by residues arginine 78, arginine 103, and 130-138 (DPMLATGGS). Residues isoleucine 193 and 198–200 (GDA) contribute to the uracil site. Aspartate 199 is a binding site for 5-phospho-alpha-D-ribose 1-diphosphate.

This sequence belongs to the UPRTase family. Mg(2+) serves as cofactor.

The catalysed reaction is UMP + diphosphate = 5-phospho-alpha-D-ribose 1-diphosphate + uracil. Its pathway is pyrimidine metabolism; UMP biosynthesis via salvage pathway; UMP from uracil: step 1/1. Its activity is regulated as follows. Allosterically activated by GTP. Catalyzes the conversion of uracil and 5-phospho-alpha-D-ribose 1-diphosphate (PRPP) to UMP and diphosphate. This is Uracil phosphoribosyltransferase from Yersinia enterocolitica serotype O:8 / biotype 1B (strain NCTC 13174 / 8081).